A 455-amino-acid polypeptide reads, in one-letter code: Bifunctional protein GlmU (455 aa).

A pyrophosphorylase region spans residues 1-228 (MYKCALVLAA…YEETIGVNSR (228 aa)). UDP-N-acetyl-alpha-D-glucosamine-binding positions include 8–11 (LAAG), K22, Q73, and 78–79 (GT). Mg(2+) is bound at residue D103. 4 residues coordinate UDP-N-acetyl-alpha-D-glucosamine: G140, E154, N169, and N226. Residue N226 participates in Mg(2+) binding. The segment at 229–249 (VQLAEAEEILKNRINLMHMEN) is linker. The interval 250-455 (GVTLIDPRTT…GWVDKKGLKK (206 aa)) is N-acetyltransferase. Positions 331 and 349 each coordinate UDP-N-acetyl-alpha-D-glucosamine. Catalysis depends on H361, which acts as the Proton acceptor. Y364 and N375 together coordinate UDP-N-acetyl-alpha-D-glucosamine. Acetyl-CoA contacts are provided by residues 384-385 (NY), A421, and R438.

It in the N-terminal section; belongs to the N-acetylglucosamine-1-phosphate uridyltransferase family. In the C-terminal section; belongs to the transferase hexapeptide repeat family. As to quaternary structure, homotrimer. Requires Mg(2+) as cofactor.

It localises to the cytoplasm. The catalysed reaction is alpha-D-glucosamine 1-phosphate + acetyl-CoA = N-acetyl-alpha-D-glucosamine 1-phosphate + CoA + H(+). It catalyses the reaction N-acetyl-alpha-D-glucosamine 1-phosphate + UTP + H(+) = UDP-N-acetyl-alpha-D-glucosamine + diphosphate. Its pathway is nucleotide-sugar biosynthesis; UDP-N-acetyl-alpha-D-glucosamine biosynthesis; N-acetyl-alpha-D-glucosamine 1-phosphate from alpha-D-glucosamine 6-phosphate (route II): step 2/2. The protein operates within nucleotide-sugar biosynthesis; UDP-N-acetyl-alpha-D-glucosamine biosynthesis; UDP-N-acetyl-alpha-D-glucosamine from N-acetyl-alpha-D-glucosamine 1-phosphate: step 1/1. It functions in the pathway bacterial outer membrane biogenesis; LPS lipid A biosynthesis. Its function is as follows. Catalyzes the last two sequential reactions in the de novo biosynthetic pathway for UDP-N-acetylglucosamine (UDP-GlcNAc). The C-terminal domain catalyzes the transfer of acetyl group from acetyl coenzyme A to glucosamine-1-phosphate (GlcN-1-P) to produce N-acetylglucosamine-1-phosphate (GlcNAc-1-P), which is converted into UDP-GlcNAc by the transfer of uridine 5-monophosphate (from uridine 5-triphosphate), a reaction catalyzed by the N-terminal domain. The protein is Bifunctional protein GlmU of Clostridium beijerinckii (strain ATCC 51743 / NCIMB 8052) (Clostridium acetobutylicum).